The primary structure comprises 271 residues: Undecaprenyl-diphosphatase (271 aa).

A run of 8 helical transmembrane segments spans residues 5–25 (YALF…FLPV), 45–65 (AATF…AVFW), 86–106 (TLSL…GLAI), 114–134 (LFGP…LIIA), 149–169 (ISYK…WPGF), 189–209 (AAEF…GLDL), 226–246 (VGFI…LALI), and 251–271 (FIPF…VFVA).

This sequence belongs to the UppP family.

It localises to the cell inner membrane. The catalysed reaction is di-trans,octa-cis-undecaprenyl diphosphate + H2O = di-trans,octa-cis-undecaprenyl phosphate + phosphate + H(+). In terms of biological role, catalyzes the dephosphorylation of undecaprenyl diphosphate (UPP). Confers resistance to bacitracin. The polypeptide is Undecaprenyl-diphosphatase (Aeromonas hydrophila subsp. hydrophila (strain ATCC 7966 / DSM 30187 / BCRC 13018 / CCUG 14551 / JCM 1027 / KCTC 2358 / NCIMB 9240 / NCTC 8049)).